Consider the following 299-residue polypeptide: Cycloserine biosynthesis protein DcsG (299 aa).

ATP contacts are provided by Lys92, Lys137, Ser144, Gln175, Pro176, and Val178. Positions 95-298 (LADLAAHGVP…FAQALAERLK (204 aa)) constitute an ATP-grasp domain. Active-site residues include Arg220 and Arg254. 2 residues coordinate Mg(2+): Glu269 and Glu271. Residue Glu271 is part of the active site.

In terms of assembly, monomer. Mg(2+) serves as cofactor.

It carries out the reaction O-ureido-D-serine + ATP + H2O + H(+) = D-cycloserine + NH4(+) + ADP + phosphate + CO2. Involved in the biosynthesis of the antibiotic D-cycloserine (DCS), a cyclic structural analog of D-alanine, used as an antitubercular agent. Catalyzes the synthesis of D-cycloserine from O-ureido-D-serine (D-OUS). It reacts with D-OUS, D-homocysteine and beta-aminooxy-D-alanine. The protein is Cycloserine biosynthesis protein DcsG of Streptomyces lavendulae.